A 251-amino-acid chain; its full sequence is Imidazole glycerol phosphate synthase subunit HisF (251 aa).

Catalysis depends on residues Asp11 and Asp130.

The protein belongs to the HisA/HisF family. As to quaternary structure, heterodimer of HisH and HisF.

It localises to the cytoplasm. It carries out the reaction 5-[(5-phospho-1-deoxy-D-ribulos-1-ylimino)methylamino]-1-(5-phospho-beta-D-ribosyl)imidazole-4-carboxamide + L-glutamine = D-erythro-1-(imidazol-4-yl)glycerol 3-phosphate + 5-amino-1-(5-phospho-beta-D-ribosyl)imidazole-4-carboxamide + L-glutamate + H(+). It functions in the pathway amino-acid biosynthesis; L-histidine biosynthesis; L-histidine from 5-phospho-alpha-D-ribose 1-diphosphate: step 5/9. Functionally, IGPS catalyzes the conversion of PRFAR and glutamine to IGP, AICAR and glutamate. The HisF subunit catalyzes the cyclization activity that produces IGP and AICAR from PRFAR using the ammonia provided by the HisH subunit. This Chlorobium phaeobacteroides (strain DSM 266 / SMG 266 / 2430) protein is Imidazole glycerol phosphate synthase subunit HisF.